The chain runs to 313 residues: ADP-L-glycero-D-manno-heptose-6-epimerase (313 aa).

NADP(+) is bound by residues 10–11 (MI), 31–32 (DN), lysine 38, arginine 53, 75–79 (EGACS), and asparagine 92. Tyrosine 139 functions as the Proton acceptor in the catalytic mechanism. Residue lysine 143 participates in NADP(+) binding. Residue asparagine 174 participates in substrate binding. Valine 175 and lysine 183 together coordinate NADP(+). Residue lysine 183 is the Proton acceptor of the active site. Residues serine 185, histidine 192, 206–209 (FAGS), arginine 214, and tyrosine 277 each bind substrate.

Belongs to the NAD(P)-dependent epimerase/dehydratase family. HldD subfamily. In terms of assembly, homopentamer. NADP(+) is required as a cofactor.

The catalysed reaction is ADP-D-glycero-beta-D-manno-heptose = ADP-L-glycero-beta-D-manno-heptose. It functions in the pathway nucleotide-sugar biosynthesis; ADP-L-glycero-beta-D-manno-heptose biosynthesis; ADP-L-glycero-beta-D-manno-heptose from D-glycero-beta-D-manno-heptose 7-phosphate: step 4/4. The protein operates within bacterial outer membrane biogenesis; LPS core biosynthesis. Its function is as follows. Catalyzes the interconversion between ADP-D-glycero-beta-D-manno-heptose and ADP-L-glycero-beta-D-manno-heptose via an epimerization at carbon 6 of the heptose. The protein is ADP-L-glycero-D-manno-heptose-6-epimerase of Vibrio vulnificus (strain YJ016).